The following is a 101-amino-acid chain: Small ribosomal subunit protein uS10 (101 aa).

Belongs to the universal ribosomal protein uS10 family. In terms of assembly, part of the 30S ribosomal subunit.

Functionally, involved in the binding of tRNA to the ribosomes. In Mycobacterium leprae (strain Br4923), this protein is Small ribosomal subunit protein uS10.